The primary structure comprises 89 residues: Small ribosomal subunit protein uS17A (89 aa).

The protein belongs to the universal ribosomal protein uS17 family. Part of the 30S ribosomal subunit.

In terms of biological role, one of the primary rRNA binding proteins, it binds specifically to the 5'-end of 16S ribosomal RNA. This is Small ribosomal subunit protein uS17A from Bacteroides thetaiotaomicron (strain ATCC 29148 / DSM 2079 / JCM 5827 / CCUG 10774 / NCTC 10582 / VPI-5482 / E50).